The sequence spans 92 residues: Small ribosomal subunit protein uS19 (92 aa).

This sequence belongs to the universal ribosomal protein uS19 family.

Its function is as follows. Protein S19 forms a complex with S13 that binds strongly to the 16S ribosomal RNA. The sequence is that of Small ribosomal subunit protein uS19 from Cyanothece sp. (strain PCC 7425 / ATCC 29141).